The sequence spans 331 residues: Endo-1,4-beta-xylanase 2 (331 aa).

Positions 1 to 17 (MKASSVLLGLAPLAALA) are cleaved as a signal peptide. The GH10 domain occupies 31–329 (QQSIDALMKA…KPAYNSVVQA (299 aa)). Asn-105 carries an N-linked (GlcNAc...) asparagine glycan. Residue Glu-159 is the Proton donor of the active site. Glu-266 (nucleophile) is an active-site residue. Cys-284 and Cys-290 are disulfide-bonded. Asn-301 carries an N-linked (GlcNAc...) asparagine glycan.

It belongs to the glycosyl hydrolase 10 (cellulase F) family.

The protein localises to the secreted. It carries out the reaction Endohydrolysis of (1-&gt;4)-beta-D-xylosidic linkages in xylans.. Its pathway is glycan degradation; xylan degradation. In terms of biological role, endo-1,4-beta-xylanase involved in the hydrolysis of xylan, a major structural heterogeneous polysaccharide found in plant biomass representing the second most abundant polysaccharide in the biosphere, after cellulose. Accounts for approximately 70 percent of the endoxylanase activity in the culture filtrate. This is Endo-1,4-beta-xylanase 2 (XYL2) from Pyricularia grisea (Crabgrass-specific blast fungus).